We begin with the raw amino-acid sequence, 685 residues long: Mannan-binding lectin serine protease 2 (685 aa).

The signal sequence occupies residues 1 to 19 (MRLLIVLGLLWSLVATLLG). One can recognise a CUB 1 domain in the interval 20–137 (SKWPEPVFGR…TGFEAFYAAE (118 aa)). Ca(2+) is bound by residues glutamate 67 and aspartate 75. Cysteines 72 and 90 form a disulfide. Residue asparagine 103 is glycosylated (N-linked (GlcNAc...) asparagine). Ca(2+) contacts are provided by aspartate 120, serine 122, asparagine 123, aspartate 138, and valine 139. The EGF-like; calcium-binding domain occupies 138-181 (DVDECRTSLGDSVPCDHYCHNYLGGYYCSCRVGYILHQNKHTCS). 4 disulfides stabilise this stretch: cysteine 152/cysteine 165, cysteine 167/cysteine 180, cysteine 184/cysteine 211, and cysteine 241/cysteine 259. At asparagine 158 the chain carries (3R)-3-hydroxyasparagine. Positions 159 and 162 each coordinate Ca(2+). In terms of domain architecture, CUB 2 spans 184-296 (CSGQVFTGRS…TGWKIHYTST (113 aa)). Asparagine 285 carries an N-linked (GlcNAc...) asparagine glycan. 2 Sushi domains span residues 298–363 (QPCP…ECSI) and 364–431 (IDCG…VCKP). 7 disulfide bridges follow: cysteine 300/cysteine 348, cysteine 328/cysteine 361, cysteine 366/cysteine 411, cysteine 396/cysteine 429, cysteine 433/cysteine 551, cysteine 597/cysteine 617, and cysteine 628/cysteine 659. One can recognise a Peptidase S1 domain in the interval 444 to 683 (IIGGQPAKPG…YIPWIENIIN (240 aa)). Residues histidine 482 and aspartate 531 each act as charge relay system in the active site. The active-site Charge relay system is serine 632. Asparagine 641 carries an N-linked (GlcNAc...) asparagine glycan.

Belongs to the peptidase S1 family. As to quaternary structure, homodimer; disulfide-linked. Binds MBL2. Isoform 2 binds to MASP1. Binds SERPING1. Post-translationally, N-glycosylated. The iron and 2-oxoglutarate dependent 3-hydroxylation of aspartate and asparagine is (R) stereospecific within EGF domains. In terms of tissue distribution, highly expressed in liver. Secreted in plasma.

It localises to the secreted. It carries out the reaction Selective cleavage after Arg-223 in complement component C2 (-Ser-Leu-Gly-Arg-|-Lys-Ile-Gln-Ile) and after Arg-76 in complement component C4 (-Gly-Leu-Gln-Arg-|-Ala-Leu-Glu-Ile).. Functionally, serum protease that plays an important role in the activation of the complement system via mannose-binding lectin. After activation by auto-catalytic cleavage it cleaves C2 and C4, leading to their activation and to the formation of C3 convertase. This is Mannan-binding lectin serine protease 2 (Masp2) from Rattus norvegicus (Rat).